Consider the following 1072-residue polypeptide: DNA-directed RNA polymerase subunit beta (1072 aa).

Belongs to the RNA polymerase beta chain family. As to quaternary structure, in plastids the minimal PEP RNA polymerase catalytic core is composed of four subunits: alpha, beta, beta', and beta''. When a (nuclear-encoded) sigma factor is associated with the core the holoenzyme is formed, which can initiate transcription.

The protein resides in the plastid. Its subcellular location is the chloroplast. The catalysed reaction is RNA(n) + a ribonucleoside 5'-triphosphate = RNA(n+1) + diphosphate. Its function is as follows. DNA-dependent RNA polymerase catalyzes the transcription of DNA into RNA using the four ribonucleoside triphosphates as substrates. This Lepidium virginicum (Virginia pepperweed) protein is DNA-directed RNA polymerase subunit beta.